Consider the following 1302-residue polypeptide: Regulator of telomere elongation helicase 1 (1302 aa).

The Helicase ATP-binding domain maps to Asn-7–His-297. Ser-42–Thr-49 is an ATP binding site. Positions 146, 164, 173, and 208 each coordinate [4Fe-4S] cluster. A Nuclear localization signal motif is present at residues Lys-152–Val-168. Positions Asp-251 to His-254 match the DEAH box motif. The span at Pro-758 to Pro-767 shows a compositional bias: low complexity. The interval Pro-758–Cys-819 is disordered. Residues Arg-770–Lys-780 are compositionally biased toward basic and acidic residues. A Nuclear localization signal motif is present at residues Pro-873–Lys-879. 4 disordered regions span residues Arg-981 to Pro-1006, Asp-1019 to Gly-1058, Cys-1134 to Glu-1153, and Val-1160 to Gly-1234. The segment covering Lys-1178 to Leu-1187 has biased composition (polar residues). The short motif at Gln-1180–Leu-1187 is the PIP-box element.

This sequence belongs to the helicase family. RAD3/XPD subfamily. As to quaternary structure, interacts with TERF1. Interacts (via PIP-box) with PCNA; the interaction is direct and essential for suppressing telomere fragility. Interacts with MMS19; the interaction mediates the association of RTEL1 with the cytosolic iron-sulfur protein assembly (CIA) complex.

It is found in the nucleus. It catalyses the reaction ATP + H2O = ADP + phosphate + H(+). Its function is as follows. A probable ATP-dependent DNA helicase implicated in telomere-length regulation, DNA repair and the maintenance of genomic stability. Acts as an anti-recombinase to counteract toxic recombination and limit crossover during meiosis. Regulates meiotic recombination and crossover homeostasis by physically dissociating strand invasion events and thereby promotes noncrossover repair by meiotic synthesis dependent strand annealing (SDSA) as well as disassembly of D loop recombination intermediates. Also disassembles T loops and prevents telomere fragility by counteracting telomeric G4-DNA structures, which together ensure the dynamics and stability of the telomere. In Pongo abelii (Sumatran orangutan), this protein is Regulator of telomere elongation helicase 1.